Reading from the N-terminus, the 410-residue chain is Mating-type locus allele B1 protein (410 aa).

The interval 1-110 (MSSDPNFSLI…FNVVSPDVGC (110 aa)) is variable domain between B alleles. Positions 107 to 184 (DVGCRNLSED…NARRRSGWSH (78 aa)) form a DNA-binding region, homeobox; TALE-type. The segment at 111 to 410 (RNLSEDLPAY…PFLCLSVAFV (300 aa)) is highly conserved between B alleles. Disordered stretches follow at residues 202 to 239 (RAKL…PLTP), 278 to 335 (TPKP…TPEL), and 374 to 395 (ARGN…PDEV). Positions 205–233 (LSSSNQSTPPSSTSDSLSNNLDDVLSDNL) are enriched in low complexity. The Nuclear localization signal motif lies at 276 to 308 (KKTPKPGMPRPVTTVAKRHPARKTKPAAKPKSR). Positions 291–307 (AKRHPARKTKPAAKPKS) are enriched in basic residues. Polar residues predominate over residues 312 to 335 (PRASTTPSIDSTLDSSKLESTPEL). The interval 333–410 (PELSMCSTAD…PFLCLSVAFV (78 aa)) is not essential for B1 function. Positions 375 to 388 (RGNRKVKALPKRAG) are enriched in basic residues.

It belongs to the TALE/M-ATYP homeobox family.

It localises to the nucleus. The B locus has at least 25 alleles, and any combination of two different B alleles yields a multimeric regulatory protein, that activates genes responsible for the pathogenicity and for the sexual development of the fungus within the corn plant. The protein is Mating-type locus allele B1 protein of Mycosarcoma maydis (Corn smut fungus).